We begin with the raw amino-acid sequence, 198 residues long: Na(+)-translocating NADH-quinone reductase subunit E (198 aa).

Helical transmembrane passes span Ser11–Val31, Val35–Val55, Phe77–Ile97, Gly110–Val130, Val140–Ile160, and Leu176–Val196.

This sequence belongs to the NqrDE/RnfAE family. Composed of six subunits; NqrA, NqrB, NqrC, NqrD, NqrE and NqrF.

Its subcellular location is the cell inner membrane. The catalysed reaction is a ubiquinone + n Na(+)(in) + NADH + H(+) = a ubiquinol + n Na(+)(out) + NAD(+). NQR complex catalyzes the reduction of ubiquinone-1 to ubiquinol by two successive reactions, coupled with the transport of Na(+) ions from the cytoplasm to the periplasm. NqrA to NqrE are probably involved in the second step, the conversion of ubisemiquinone to ubiquinol. The protein is Na(+)-translocating NADH-quinone reductase subunit E of Histophilus somni (strain 129Pt) (Haemophilus somnus).